The primary structure comprises 690 residues: Translation factor GUF1, mitochondrial (690 aa).

Residues 40–68 are disordered; the sequence is SVTVPAARRHNSTKSTNSTTSTNSTTATS. Over residues 52–68 the composition is skewed to low complexity; that stretch reads TKSTNSTTSTNSTTATS. Residues 89 to 272 enclose the tr-type G domain; it reads ERYRNFCIVA…AVIKKMPAPV (184 aa). GTP-binding positions include 98 to 105, 165 to 169, and 219 to 222; these read AHIDHGKS, DTPGH, and NKID.

It belongs to the TRAFAC class translation factor GTPase superfamily. Classic translation factor GTPase family. LepA subfamily.

The protein resides in the mitochondrion inner membrane. The catalysed reaction is GTP + H2O = GDP + phosphate + H(+). Promotes mitochondrial protein synthesis. May act as a fidelity factor of the translation reaction, by catalyzing a one-codon backward translocation of tRNAs on improperly translocated ribosomes. Binds to mitochondrial ribosomes in a GTP-dependent manner. This chain is Translation factor GUF1, mitochondrial, found in Sordaria macrospora (strain ATCC MYA-333 / DSM 997 / K(L3346) / K-hell).